We begin with the raw amino-acid sequence, 481 residues long: uncharacterized protein (481 aa).

A run of 11 helical transmembrane segments spans residues 14 to 34, 46 to 66, 90 to 110, 134 to 154, 167 to 187, 218 to 238, 258 to 278, 303 to 323, 377 to 397, 411 to 431, and 446 to 466; these read LGFC…GIFL, FAPM…IVFA, IGIY…GVLA, FSVK…INLF, TVGK…IITT, FSSM…FESI, IAIF…MLLG, IIVV…SFGA, LAVI…IALA, AFTD…LAVS, and YFSI…AYLH.

This sequence belongs to the amino acid-polyamine-organocation (APC) superfamily.

The protein localises to the cell membrane. In terms of biological role, probable amino-acid or metabolite transport protein. This is an uncharacterized protein from Mycobacterium tuberculosis (strain CDC 1551 / Oshkosh).